The following is a 466-amino-acid chain: Adenosylhomocysteinase (466 aa).

Positions 57, 132, and 192 each coordinate substrate. NAD(+) is bound at residue 193–195 (TTT). Residues K222 and D226 each coordinate substrate. NAD(+) contacts are provided by residues N227, 256-261 (GYGDVG), E279, N314, 335-337 (IGH), and N380.

The protein belongs to the adenosylhomocysteinase family. Requires NAD(+) as cofactor.

Its subcellular location is the cytoplasm. It carries out the reaction S-adenosyl-L-homocysteine + H2O = L-homocysteine + adenosine. It functions in the pathway amino-acid biosynthesis; L-homocysteine biosynthesis; L-homocysteine from S-adenosyl-L-homocysteine: step 1/1. Its function is as follows. May play a key role in the regulation of the intracellular concentration of adenosylhomocysteine. The chain is Adenosylhomocysteinase from Brucella abortus (strain S19).